Consider the following 181-residue polypeptide: Large ribosomal subunit protein uL5 (181 aa).

This sequence belongs to the universal ribosomal protein uL5 family. Part of the 50S ribosomal subunit; part of the 5S rRNA/L5/L18/L25 subcomplex. Contacts the 5S rRNA and the P site tRNA. Forms a bridge to the 30S subunit in the 70S ribosome.

In terms of biological role, this is one of the proteins that bind and probably mediate the attachment of the 5S RNA into the large ribosomal subunit, where it forms part of the central protuberance. In the 70S ribosome it contacts protein S13 of the 30S subunit (bridge B1b), connecting the 2 subunits; this bridge is implicated in subunit movement. Contacts the P site tRNA; the 5S rRNA and some of its associated proteins might help stabilize positioning of ribosome-bound tRNAs. This Trichodesmium erythraeum (strain IMS101) protein is Large ribosomal subunit protein uL5.